Consider the following 381-residue polypeptide: Cytochrome b (381 aa).

4 consecutive transmembrane segments (helical) span residues 34 to 54, 78 to 99, 114 to 134, and 179 to 199; these read FGSLLGLCLIIQIVTGLFLAM, WLIRNIHANGASLFFVCIYFHI, WNIGVILLFLLMATAFVGYVL, and FFAFHFLLPFLITALMIIHVL. Heme b contacts are provided by His-84 and His-98. Residues His-183 and His-197 each contribute to the heme b site. Residue His-202 participates in a ubiquinone binding. The next 4 helical transmembrane spans lie at 227-247, 289-309, 321-341, and 348-368; these read YKDALGFLTLLILLGVLALFL, LGGVLALLFSILILMLVPFLH, LTQIFFWTLVTNMLILTWIGG, and FILIGQIASISYFSLFLIALP.

The protein belongs to the cytochrome b family. The cytochrome bc1 complex contains 3 respiratory subunits (MT-CYB, CYC1 and UQCRFS1), 2 core proteins (UQCRC1 and UQCRC2) and probably 6 low-molecular weight proteins. It depends on heme b as a cofactor.

It is found in the mitochondrion inner membrane. Component of the ubiquinol-cytochrome c reductase complex (complex III or cytochrome b-c1 complex) that is part of the mitochondrial respiratory chain. The b-c1 complex mediates electron transfer from ubiquinol to cytochrome c. Contributes to the generation of a proton gradient across the mitochondrial membrane that is then used for ATP synthesis. The polypeptide is Cytochrome b (mt-cyb) (Isurus oxyrinchus (Shortfin mako shark)).